Here is an 843-residue protein sequence, read N- to C-terminus: Protein translocase subunit SecA 1 (843 aa).

ATP-binding positions include Gln-91, Gly-109–Thr-113, and Asp-498. The span at Glu-799–Lys-813 shows a compositional bias: basic and acidic residues. Residues Glu-799–Asn-826 are disordered. Cys-829, Cys-831, Cys-840, and His-841 together coordinate Zn(2+).

This sequence belongs to the SecA family. In terms of assembly, monomer and homodimer. Part of the essential Sec protein translocation apparatus which comprises SecA, SecYEG and auxiliary proteins SecDF. Other proteins may also be involved. It depends on Zn(2+) as a cofactor.

The protein localises to the cell membrane. The protein resides in the cytoplasm. It carries out the reaction ATP + H2O + cellular proteinSide 1 = ADP + phosphate + cellular proteinSide 2.. In terms of biological role, part of the Sec protein translocase complex. Interacts with the SecYEG preprotein conducting channel. Has a central role in coupling the hydrolysis of ATP to the transfer of proteins into and across the cell membrane, serving as an ATP-driven molecular motor driving the stepwise translocation of polypeptide chains across the membrane. This Staphylococcus aureus (strain N315) protein is Protein translocase subunit SecA 1.